We begin with the raw amino-acid sequence, 651 residues long: Acetyl-coenzyme A synthetase (651 aa).

Residues 191 to 194 (RGGK), Thr311, and Asn335 each bind CoA. ATP-binding positions include 387–389 (GEP), 411–416 (DTWWQT), Asp500, and Arg515. A CoA-binding site is contributed by Ser523. An ATP-binding site is contributed by Arg526. Val537, His539, and Val542 together coordinate Mg(2+). Residue Arg584 coordinates CoA. Lys609 is subject to N6-acetyllysine.

It belongs to the ATP-dependent AMP-binding enzyme family. Requires Mg(2+) as cofactor. Acetylated. Deacetylation by the SIR2-homolog deacetylase activates the enzyme.

It catalyses the reaction acetate + ATP + CoA = acetyl-CoA + AMP + diphosphate. Functionally, catalyzes the conversion of acetate into acetyl-CoA (AcCoA), an essential intermediate at the junction of anabolic and catabolic pathways. AcsA undergoes a two-step reaction. In the first half reaction, AcsA combines acetate with ATP to form acetyl-adenylate (AcAMP) intermediate. In the second half reaction, it can then transfer the acetyl group from AcAMP to the sulfhydryl group of CoA, forming the product AcCoA. This is Acetyl-coenzyme A synthetase from Pseudomonas syringae pv. syringae (strain B728a).